Here is an 823-residue protein sequence, read N- to C-terminus: Ankyrin repeat domain-containing protein 20B (823 aa).

6 ANK repeats span residues 32-65 (SELQ…ARDK), 66-95 (QHRT…QIDI), 99-128 (ENRT…NPNL), 132-161 (YGNT…HIEA), 165-194 (DSNT…STHA), and 198-227 (LRRS…DVFA). 2 disordered regions span residues 302 to 343 (PEKV…GVED) and 355 to 401 (VQTL…QLSE). Over residues 372–382 (QERHERSEKKQ) the composition is skewed to basic and acidic residues. Coiled coils occupy residues 431–480 (KKLK…KQLE), 565–724 (EMIT…NNST), and 776–805 (LVLE…EKAE).

The sequence is that of Ankyrin repeat domain-containing protein 20B (ANKRD20A8P) from Homo sapiens (Human).